The chain runs to 337 residues: Phosphatidate cytidylyltransferase, mitochondrial (337 aa).

It belongs to the TAM41 family. Requires Mg(2+) as cofactor. As to expression, brain and liver.

It is found in the mitochondrion inner membrane. The enzyme catalyses a 1,2-diacyl-sn-glycero-3-phosphate + CTP + H(+) = a CDP-1,2-diacyl-sn-glycerol + diphosphate. The protein operates within phospholipid metabolism; CDP-diacylglycerol biosynthesis; CDP-diacylglycerol from sn-glycerol 3-phosphate: step 3/3. In terms of biological role, catalyzes the conversion of phosphatidic acid (PA) to CDP-diacylglycerol (CDP-DAG), an essential intermediate in the synthesis of phosphatidylglycerol, cardiolipin and phosphatidylinositol. The sequence is that of Phosphatidate cytidylyltransferase, mitochondrial (Tamm41) from Rattus norvegicus (Rat).